A 250-amino-acid polypeptide reads, in one-letter code: Ubiquinone/menaquinone biosynthesis C-methyltransferase UbiE (250 aa).

S-adenosyl-L-methionine is bound by residues Thr-73, Asp-94, 122–123 (NA), and Ser-139.

The protein belongs to the class I-like SAM-binding methyltransferase superfamily. MenG/UbiE family.

The catalysed reaction is a 2-demethylmenaquinol + S-adenosyl-L-methionine = a menaquinol + S-adenosyl-L-homocysteine + H(+). It catalyses the reaction a 2-methoxy-6-(all-trans-polyprenyl)benzene-1,4-diol + S-adenosyl-L-methionine = a 5-methoxy-2-methyl-3-(all-trans-polyprenyl)benzene-1,4-diol + S-adenosyl-L-homocysteine + H(+). It participates in quinol/quinone metabolism; menaquinone biosynthesis; menaquinol from 1,4-dihydroxy-2-naphthoate: step 2/2. The protein operates within cofactor biosynthesis; ubiquinone biosynthesis. Methyltransferase required for the conversion of demethylmenaquinol (DMKH2) to menaquinol (MKH2) and the conversion of 2-polyprenyl-6-methoxy-1,4-benzoquinol (DDMQH2) to 2-polyprenyl-3-methyl-6-methoxy-1,4-benzoquinol (DMQH2). The chain is Ubiquinone/menaquinone biosynthesis C-methyltransferase UbiE from Francisella tularensis subsp. tularensis (strain WY96-3418).